We begin with the raw amino-acid sequence, 510 residues long: Glycerol kinase (510 aa).

ADP is bound at residue T13. ATP is bound by residues T13 and T14. Position 13 (T13) interacts with sn-glycerol 3-phosphate. R17 is an ADP binding site. Sn-glycerol 3-phosphate contacts are provided by R83, E84, Y135, and D255. The glycerol site is built by R83, E84, Y135, D255, and Q256. ADP contacts are provided by T277, G321, G421, and N425. ATP contacts are provided by T277, G321, and G421.

The protein belongs to the FGGY kinase family.

The catalysed reaction is glycerol + ATP = sn-glycerol 3-phosphate + ADP + H(+). It functions in the pathway polyol metabolism; glycerol degradation via glycerol kinase pathway; sn-glycerol 3-phosphate from glycerol: step 1/1. Its function is as follows. Key enzyme in the regulation of glycerol uptake and metabolism. Catalyzes the phosphorylation of glycerol to yield sn-glycerol 3-phosphate. The sequence is that of Glycerol kinase from Haloarcula marismortui (strain ATCC 43049 / DSM 3752 / JCM 8966 / VKM B-1809) (Halobacterium marismortui).